A 334-amino-acid chain; its full sequence is MFDLVGPRLSADEREFLCHPAAGGLILFSRNYASPDQMLALVSEVRSLRPDMLIAVDHEGGRVQRFREGFTRLPPASAYLEVAGEAGLAAAETAGWLMAAELRAVGVDFSFAPVLDVDSGISTVIGDRAFARTPEEVTAAARAFATGMRRAGMAAVGKHFPGHGGVAGDSHLVLPEDRRELEELLARDLLPFSALIRENLEGIMPAHVLYSRIDARPPCFSPFWLQTILRERMNFDGAIFSDDLSMAGAAVAGDYAARALAALEAGCDMLVVCNTPEATASILEALENRTASPGSTRRLAAMCGRSRIDRDALLASSEWRNAVDRIHSFNDSAQ.

Substrate is bound by residues aspartate 57, arginine 65, arginine 128, and 158-159 (KH). The active-site Proton donor/acceptor is histidine 171. The active-site Nucleophile is aspartate 242.

The protein belongs to the glycosyl hydrolase 3 family. NagZ subfamily.

It localises to the cytoplasm. It carries out the reaction Hydrolysis of terminal non-reducing N-acetyl-D-hexosamine residues in N-acetyl-beta-D-hexosaminides.. It participates in cell wall biogenesis; peptidoglycan recycling. Functionally, plays a role in peptidoglycan recycling by cleaving the terminal beta-1,4-linked N-acetylglucosamine (GlcNAc) from peptide-linked peptidoglycan fragments, giving rise to free GlcNAc, anhydro-N-acetylmuramic acid and anhydro-N-acetylmuramic acid-linked peptides. The polypeptide is Beta-hexosaminidase (Methylococcus capsulatus (strain ATCC 33009 / NCIMB 11132 / Bath)).